A 141-amino-acid chain; its full sequence is Hemoglobin subunit alpha (141 aa).

One can recognise a Globin domain in the interval 1–141; that stretch reads VLSPTDKTNV…VSTVLTSKYR (141 aa). A Phosphoserine modification is found at Ser3. Position 7 is an N6-succinyllysine (Lys7). Thr8 is subject to Phosphothreonine. Residue Lys11 is modified to N6-succinyllysine. Tyr24 bears the Phosphotyrosine mark. Residue Ser35 is modified to Phosphoserine. Lys40 carries the N6-succinyllysine modification. Residue Ser49 is modified to Phosphoserine. His58 is an O2 binding site. Heme b is bound at residue His87. A Phosphoserine modification is found at Ser102. Residue Thr108 is modified to Phosphothreonine. Residue Ser124 is modified to Phosphoserine. Residues Thr134 and Thr137 each carry the phosphothreonine modification. Ser138 carries the phosphoserine modification.

The protein belongs to the globin family. In terms of assembly, heterotetramer of two alpha chains and two beta chains. As to expression, red blood cells.

Involved in oxygen transport from the lung to the various peripheral tissues. In terms of biological role, hemopressin acts as an antagonist peptide of the cannabinoid receptor CNR1. Hemopressin-binding efficiently blocks cannabinoid receptor CNR1 and subsequent signaling. The sequence is that of Hemoglobin subunit alpha (HBA) from Rhinoceros unicornis (Greater Indian rhinoceros).